The chain runs to 296 residues: tRNA dimethylallyltransferase (296 aa).

An ATP-binding site is contributed by G19 to S26. T21–S26 serves as a coordination point for substrate.

It belongs to the IPP transferase family. In terms of assembly, monomer. It depends on Mg(2+) as a cofactor.

The catalysed reaction is adenosine(37) in tRNA + dimethylallyl diphosphate = N(6)-dimethylallyladenosine(37) in tRNA + diphosphate. Functionally, catalyzes the transfer of a dimethylallyl group onto the adenine at position 37 in tRNAs that read codons beginning with uridine, leading to the formation of N6-(dimethylallyl)adenosine (i(6)A). This is tRNA dimethylallyltransferase from Dinoroseobacter shibae (strain DSM 16493 / NCIMB 14021 / DFL 12).